A 239-amino-acid chain; its full sequence is ATP synthase subunit a, chloroplastic (239 aa).

Helical transmembrane passes span 30–50 (VLLV…LGTF), 87–107 (VPFI…GALV), 126–146 (INTT…AGLS), 191–211 (LVVA…VMVL), and 212–232 (GLFA…SYIG).

This sequence belongs to the ATPase A chain family. F-type ATPases have 2 components, CF(1) - the catalytic core - and CF(0) - the membrane proton channel. CF(1) has five subunits: alpha(3), beta(3), gamma(1), delta(1), epsilon(1). CF(0) has four main subunits: a, b, b' and c.

Its subcellular location is the plastid. The protein localises to the chloroplast thylakoid membrane. In terms of biological role, key component of the proton channel; it plays a direct role in the translocation of protons across the membrane. The protein is ATP synthase subunit a, chloroplastic of Cyanidium caldarium (Red alga).